We begin with the raw amino-acid sequence, 652 residues long: Acetyl-coenzyme A synthetase (652 aa).

Residues 189-192 and T311 contribute to the CoA site; that span reads RGDK. Residues 387-389, 411-416, D500, and R515 contribute to the ATP site; these read GEP and DTWWQT. Residue S523 participates in CoA binding. ATP is bound at residue R526. Mg(2+) is bound by residues H539 and V542. Residue R584 participates in CoA binding. Position 609 is an N6-acetyllysine (K609).

This sequence belongs to the ATP-dependent AMP-binding enzyme family. Mg(2+) serves as cofactor. Post-translationally, acetylated. Deacetylation by the SIR2-homolog deacetylase activates the enzyme.

The enzyme catalyses acetate + ATP + CoA = acetyl-CoA + AMP + diphosphate. Functionally, catalyzes the conversion of acetate into acetyl-CoA (AcCoA), an essential intermediate at the junction of anabolic and catabolic pathways. AcsA undergoes a two-step reaction. In the first half reaction, AcsA combines acetate with ATP to form acetyl-adenylate (AcAMP) intermediate. In the second half reaction, it can then transfer the acetyl group from AcAMP to the sulfhydryl group of CoA, forming the product AcCoA. This chain is Acetyl-coenzyme A synthetase, found in Bartonella bacilliformis (strain ATCC 35685 / KC583 / Herrer 020/F12,63).